The sequence spans 236 residues: Small ribosomal subunit protein uS3 (236 aa).

Residues Ile39–His107 enclose the KH type-2 domain.

It belongs to the universal ribosomal protein uS3 family. Part of the 30S ribosomal subunit. Forms a tight complex with proteins S10 and S14.

In terms of biological role, binds the lower part of the 30S subunit head. Binds mRNA in the 70S ribosome, positioning it for translation. This Bartonella quintana (strain Toulouse) (Rochalimaea quintana) protein is Small ribosomal subunit protein uS3.